The chain runs to 49 residues: Putative metallothionein MT1DP (49 aa).

The segment at 1 to 29 (MDLSCSCATGGSCTCASSCKCKEYKCTSC) is beta. C5, C7, C13, C15, C19, C21, C26, C29, C33, C34, C36, C37, C41, C44, and C48 together coordinate a divalent metal cation. Positions 30 to 49 (KKNCCSCCPMGCAKCAQGCT) are alpha.

This sequence belongs to the metallothionein superfamily. Type 1 family.

In terms of biological role, metallothioneins have a high content of cysteine residues that bind various heavy metals. This chain is Putative metallothionein MT1DP (MT1DP), found in Homo sapiens (Human).